We begin with the raw amino-acid sequence, 326 residues long: Apolipoprotein F (326 aa).

The signal sequence occupies residues Met1–Asp35. Residues Ala36–Arg164 constitute a propeptide that is removed on maturation. N-linked (GlcNAc...) asparagine glycosylation is present at Asn118. Thr274 carries an O-linked (GalNAc...) threonine glycan. Phosphoserine is present on Ser323.

It belongs to the apolipoprotein F family. In terms of processing, O-glycosylated with core 1 or possibly core 8 glycans. In terms of tissue distribution, expressed by the liver and secreted in plasma.

The protein resides in the secreted. Its function is as follows. Minor apolipoprotein that associates with LDL. Inhibits cholesteryl ester transfer protein (CETP) activity and appears to be an important regulator of cholesterol transport. Also associates to a lesser degree with VLDL, Apo-AI and Apo-AII. This chain is Apolipoprotein F (APOF), found in Homo sapiens (Human).